Consider the following 473-residue polypeptide: MSLLVVGLNHQTAPTSLLERTSVSAEDIPKVLHDLAEGTHVSEAVVLSTCNRIEIYAEVETFHGGVADISDQLSRICGIDLGDLAGHLYVHHEARAIGHLFSVVCGLDSMLVGESQILGQVRTAFRAGQAAGVAGSALSGLFQAALRVGKRAHSETSIDAAGASIVSVGVRLAASGLGLHSEVPAVPVAPPGGRALDGGGVAAEGPRHAVTPEPPPLAGTRVLLIGAGAVGSLAAQTVRRAGAGEVVIANRTAARAARVAEAHEARVVGLTDLAHEITMADLVISSTGASGLVVEHELVAAALPGRAGRPLVFLDLALPHDIDPGVRELPGVSLIDLDALRIALDGAQVTHDVEAVRALVAAEVASFLDRRRAGRVAPTVVALRAHAAAVVRSELARLHTRLPDLDDREWSLVEGSVRRVVDKLLHAPTVRVQELAGAPGGDAYAEALRELFDLPREVPAVVSAPDLDLLERS.

Substrate is bound by residues 49-52 (TCNR), Ser109, 114-116 (ESQ), and Gln120. Cys50 acts as the Nucleophile in catalysis. Residues 196-215 (LDGGGVAAEGPRHAVTPEPP) form a disordered region. 226 to 231 (GAGAVG) contacts NADP(+).

It belongs to the glutamyl-tRNA reductase family. Homodimer.

The enzyme catalyses (S)-4-amino-5-oxopentanoate + tRNA(Glu) + NADP(+) = L-glutamyl-tRNA(Glu) + NADPH + H(+). It participates in porphyrin-containing compound metabolism; protoporphyrin-IX biosynthesis; 5-aminolevulinate from L-glutamyl-tRNA(Glu): step 1/2. Functionally, catalyzes the NADPH-dependent reduction of glutamyl-tRNA(Glu) to glutamate 1-semialdehyde (GSA). The sequence is that of Glutamyl-tRNA reductase from Frankia casuarinae (strain DSM 45818 / CECT 9043 / HFP020203 / CcI3).